The chain runs to 301 residues: Putative carboxypeptidase slr1534 (301 aa).

Catalysis depends on Ser116, which acts as the Nucleophile. Active-site charge relay system residues include Glu206 and His276.

The protein belongs to the peptidase S66 family.

This Synechocystis sp. (strain ATCC 27184 / PCC 6803 / Kazusa) protein is Putative carboxypeptidase slr1534.